A 256-amino-acid polypeptide reads, in one-letter code: Pimeloyl-[acyl-carrier protein] methyl ester esterase (256 aa).

Positions 15 to 242 (HLVLLHGWGL…AAHAPFISHP (228 aa)) constitute an AB hydrolase-1 domain. Residues W22, 82 to 83 (SL), and 143 to 147 (FLALQ) contribute to the substrate site. S82 (nucleophile) is an active-site residue. Active-site residues include D207 and H235. A substrate-binding site is contributed by H235.

It belongs to the AB hydrolase superfamily. Carboxylesterase BioH family. Monomer.

Its subcellular location is the cytoplasm. It catalyses the reaction 6-carboxyhexanoyl-[ACP] methyl ester + H2O = 6-carboxyhexanoyl-[ACP] + methanol + H(+). The protein operates within cofactor biosynthesis; biotin biosynthesis. Its function is as follows. The physiological role of BioH is to remove the methyl group introduced by BioC when the pimeloyl moiety is complete. It allows to synthesize pimeloyl-ACP via the fatty acid synthetic pathway through the hydrolysis of the ester bonds of pimeloyl-ACP esters. The chain is Pimeloyl-[acyl-carrier protein] methyl ester esterase from Salmonella newport (strain SL254).